We begin with the raw amino-acid sequence, 131 residues long: Small ribosomal subunit protein uS12 (131 aa).

Positions 1 to 22 are disordered; sequence MPTTQQLLRKGRKVLQKKSKVP. Over residues 9–20 the composition is skewed to basic residues; it reads RKGRKVLQKKSK. D89 carries the post-translational modification 3-methylthioaspartic acid. The disordered stretch occupies residues 102-131; that stretch reads LDTQGVKDRNKSRSKYGTKKPKAGAAAAKK. The span at 113 to 131 shows a compositional bias: basic residues; it reads SRSKYGTKKPKAGAAAAKK.

It belongs to the universal ribosomal protein uS12 family. Part of the 30S ribosomal subunit. Contacts proteins S8 and S17. May interact with IF1 in the 30S initiation complex.

With S4 and S5 plays an important role in translational accuracy. In terms of biological role, interacts with and stabilizes bases of the 16S rRNA that are involved in tRNA selection in the A site and with the mRNA backbone. Located at the interface of the 30S and 50S subunits, it traverses the body of the 30S subunit contacting proteins on the other side and probably holding the rRNA structure together. The combined cluster of proteins S8, S12 and S17 appears to hold together the shoulder and platform of the 30S subunit. The protein is Small ribosomal subunit protein uS12 of Deinococcus radiodurans (strain ATCC 13939 / DSM 20539 / JCM 16871 / CCUG 27074 / LMG 4051 / NBRC 15346 / NCIMB 9279 / VKM B-1422 / R1).